The primary structure comprises 447 residues: Oxysterols receptor LXR-alpha (447 aa).

Disordered stretches follow at residues Met1–Ser37 and Ala65–Pro88. The interval Met1–Glu96 is transactivation AF-1; required for ligand-independent transactivation function. Residues Gly24 to Ser37 show a composition bias toward low complexity. Positions Asn95–Ser170 form a DNA-binding region, nuclear receptor. 2 consecutive NR C4-type zinc fingers follow at residues Cys98 to Cys118 and Cys134 to Cys158. The interval Lys180–Ile202 is disordered. The segment at Gln205–Glu447 is transactivation AF-2; required for ligand-dependent transactivation function; mediates interaction with CCAR2. The NR LBD domain maps to Glu209–Glu447.

Belongs to the nuclear hormone receptor family. NR1 subfamily. In terms of assembly, heterodimer of NR1H3 and RXR (retinoic acid receptor). Interacts with CCAR2 (via N-terminus) in a ligand-independent manner. Interacts with SIRT1 and this interaction is inhibited by CCAR2. Interacts with GPS2. Post-translationally, ubiquitinated by UBR5, leading to its degradation: UBR5 specifically recognizes and binds ligand-bound NR1H3 when it is not associated with coactivators (NCOAs). In presence of NCOAs, the UBR5-degron is not accessible, preventing its ubiquitination and degradation. As to expression, visceral organs specific expression. Strong expression was found in liver, kidney and intestine followed by spleen and to a lesser extent the adrenals.

It is found in the nucleus. The protein localises to the cytoplasm. Nuclear receptor that exhibits a ligand-dependent transcriptional activation activity. Interaction with retinoic acid receptor (RXR) shifts RXR from its role as a silent DNA-binding partner to an active ligand-binding subunit in mediating retinoid responses through target genes defined by LXRES. LXRES are DR4-type response elements characterized by direct repeats of two similar hexanuclotide half-sites spaced by four nucleotides. Plays an important role in the regulation of cholesterol homeostasis, regulating cholesterol uptake through MYLIP-dependent ubiquitination of LDLR, VLDLR and LRP8. Interplays functionally with RORA for the regulation of genes involved in liver metabolism. Induces LPCAT3-dependent phospholipid remodeling in endoplasmic reticulum (ER) membranes of hepatocytes, driving SREBF1 processing and lipogenesis. Via LPCAT3, triggers the incorporation of arachidonate into phosphatidylcholines of ER membranes, increasing membrane dynamics and enabling triacylglycerols transfer to nascent very low-density lipoprotein (VLDL) particles. Via LPCAT3 also counteracts lipid-induced ER stress response and inflammation, likely by modulating SRC kinase membrane compartmentalization and limiting the synthesis of lipid inflammatory mediators. The polypeptide is Oxysterols receptor LXR-alpha (NR1H3) (Homo sapiens (Human)).